A 928-amino-acid polypeptide reads, in one-letter code: Arf guanine nucleotide exchange factor sec74 (928 aa).

Composition is skewed to polar residues over residues 1-12 (MDESSRIASSSA) and 57-83 (TITSDTPKVSSQHSPVSSAYTGDSTTD). Disordered regions lie at residues 1–152 (MDES…RPSS) and 227–249 (SLSSNFSARTPASNQSSVSEDFG). Ser67 bears the Phosphoserine mark. Low complexity-rich tracts occupy residues 89–102 (GHSSSQKLSNKVSS) and 115–132 (SKSSSSQCSSPFLPTSSS). One can recognise an SEC7 domain in the interval 228-420 (LSSNFSARTP…ECFYDNITYT (193 aa)). Residues 234–245 (ARTPASNQSSVS) show a composition bias toward polar residues. Positions 548-677 (KVFKLGILIQ…WLVKINFVST (130 aa)) constitute a PH domain.

The protein resides in the cytoplasm. The protein localises to the cell tip. Its function is as follows. Guanine nucleotide exchange factor for Arf GTPases, stimulating the nucleotide exchange from the GDP-bound to the GTP-bound form. Involved in vesicular transport. The sequence is that of Arf guanine nucleotide exchange factor sec74 (sec74) from Schizosaccharomyces pombe (strain 972 / ATCC 24843) (Fission yeast).